A 357-amino-acid chain; its full sequence is Non-structural protein NS2 (357 aa).

Disordered stretches follow at residues 169–191 (PRLQVHSVAPREESRWMDDDEAK) and 229–266 (DERDEGDRDERGDEEQVKTLSDDDDQGEDASDDEHPKT). Residues 233-249 (EGDRDERGDEEQVKTLS) show a composition bias toward basic and acidic residues. A compositionally biased stretch (acidic residues) spans 250–260 (DDDDQGEDASD).

Belongs to the orbivirus non-structural protein NS2 family.

Its function is as follows. Single-stranded RNA-binding protein. In Antilocapra americana (Pronghorn), this protein is Non-structural protein NS2 (Segment-8).